The following is a 675-amino-acid chain: Methionine--tRNA ligase (675 aa).

The short motif at 15-25 (PYANGSIHLGH) is the 'HIGH' region element. Residues C146, C149, C159, and C162 each coordinate Zn(2+). Positions 331-335 (KMSKS) match the 'KMSKS' region motif. Residue K334 participates in ATP binding. Residues 574 to 675 (DFAKIDLRIA…EGAQPGMKVK (102 aa)) form the tRNA-binding domain.

This sequence belongs to the class-I aminoacyl-tRNA synthetase family. MetG type 1 subfamily. Homodimer. Zn(2+) serves as cofactor.

The protein resides in the cytoplasm. It carries out the reaction tRNA(Met) + L-methionine + ATP = L-methionyl-tRNA(Met) + AMP + diphosphate. In terms of biological role, is required not only for elongation of protein synthesis but also for the initiation of all mRNA translation through initiator tRNA(fMet) aminoacylation. This Pseudoalteromonas atlantica (strain T6c / ATCC BAA-1087) protein is Methionine--tRNA ligase.